The following is a 608-amino-acid chain: 2',5'-phosphodiesterase 12 (608 aa).

A mitochondrion-targeting transit peptide spans 1 to 16 (MWRLPGRAALRGVRSV). Positions 91–111 (AKKSRKNRAHSSGGAACAATG) are disordered. Residues 100–111 (HSSGGAACAATG) show a composition bias toward low complexity. Ser-216 carries the phosphoserine modification. Mg(2+) is bound by residues Glu-350, Asp-495, and Asn-497. Asp-495 (proton donor/acceptor) is an active-site residue.

This sequence belongs to the CCR4/nocturin family. Mg(2+) serves as cofactor.

The protein localises to the mitochondrion matrix. It carries out the reaction Exonucleolytic cleavage of poly(A) to 5'-AMP.. Functionally, enzyme that cleaves 2',5'-phosphodiester bond linking adenosines of the 5'-triphosphorylated oligoadenylates, triphosphorylated oligoadenylates referred as 2-5A modulates the 2-5A system. Degrades triphosphorylated 2-5A to produce AMP and ATP. Also cleaves 3',5'-phosphodiester bond of oligoadenylates. Plays a role as a negative regulator of the 2-5A system that is one of the major pathways for antiviral and antitumor functions induced by interferons (IFNs). Suppression of this enzyme increases cellular 2-5A levels and decreases viral replication in cultured small-airway epithelial cells. In Rattus norvegicus (Rat), this protein is 2',5'-phosphodiesterase 12 (Pde12).